We begin with the raw amino-acid sequence, 391 residues long: Ferrochelatase (391 aa).

Fe cation is bound by residues His-196 and Glu-281.

The protein belongs to the ferrochelatase family.

The protein localises to the cytoplasm. The catalysed reaction is heme b + 2 H(+) = protoporphyrin IX + Fe(2+). Its pathway is porphyrin-containing compound metabolism; protoheme biosynthesis; protoheme from protoporphyrin-IX: step 1/1. In terms of biological role, catalyzes the ferrous insertion into protoporphyrin IX. This Synechococcus sp. (strain CC9311) protein is Ferrochelatase.